Reading from the N-terminus, the 149-residue chain is Calmodulin-2 (149 aa).

A2 is subject to N-acetylalanine. EF-hand domains follow at residues 8 to 43 (EQIAEFKEAFSLFDKDGDGTITTKELGTVMRSLGQN), 44 to 79 (PTEAELQDMINEVDADGNGTIDFPEFLTMMARKMKD), 81 to 116 (DSEEEIREAFRVFDKDGNGFISAAELRHVMTNLGEK), and 117 to 149 (LTDEEVDEMVREADIDGDGQVNYEEFVEMMTSK). Ca(2+) contacts are provided by D21, D23, D25, T27, E32, D57, D59, N61, T63, E68, D94, D96, N98, and E105. At K116 the chain carries N6,N6,N6-trimethyllysine. Ca(2+)-binding residues include D130, D132, D134, Q136, and E141.

It belongs to the calmodulin family.

Calmodulin mediates the control of a large number of enzymes, ion channels and other proteins by Ca(2+). Among the enzymes to be stimulated by the calmodulin-Ca(2+) complex are a number of protein kinases and phosphatases. In Branchiostoma lanceolatum (Common lancelet), this protein is Calmodulin-2 (CAM2).